The primary structure comprises 41 residues: U-theraphotoxin-Lk1a (41 aa).

3 disulfide bridges follow: cysteine 1–cysteine 16, cysteine 8–cysteine 21, and cysteine 15–cysteine 36.

The protein belongs to the neurotoxin 14 (magi-1) family. 08 (Ltx-4) subfamily. Expressed by the venom gland.

The protein localises to the secreted. In terms of biological role, toxin that causes irreversible contractile paralysis in adult Aedes aegypti resulting in 100% mortality after 24 hours. The sequence is that of U-theraphotoxin-Lk1a from Lasiodora klugi (Bahia scarlet tarantula).